Here is a 403-residue protein sequence, read N- to C-terminus: Phosphoglycerate kinase (403 aa).

Residues 22–24 (DLN), arginine 37, 60–63 (HLGR), arginine 119, and arginine 156 contribute to the substrate site. ATP contacts are provided by residues lysine 206, glycine 302, glutamate 333, and 359 to 362 (GGDS).

The protein belongs to the phosphoglycerate kinase family. In terms of assembly, monomer.

Its subcellular location is the cytoplasm. It catalyses the reaction (2R)-3-phosphoglycerate + ATP = (2R)-3-phospho-glyceroyl phosphate + ADP. It functions in the pathway carbohydrate degradation; glycolysis; pyruvate from D-glyceraldehyde 3-phosphate: step 2/5. This Streptomyces avermitilis (strain ATCC 31267 / DSM 46492 / JCM 5070 / NBRC 14893 / NCIMB 12804 / NRRL 8165 / MA-4680) protein is Phosphoglycerate kinase.